The following is a 152-amino-acid chain: Ribonuclease pancreatic (152 aa).

The first 24 residues, 1–24 (MALDKSVILLPLLVLVLLVLGCLG), serve as a signal peptide directing secretion. Positions 31 and 34 each coordinate substrate. The active-site Proton acceptor is histidine 36. N-linked (GlcNAc...) asparagine glycosylation is present at asparagine 46. Intrachain disulfides connect cysteine 50/cysteine 108, cysteine 64/cysteine 119, cysteine 82/cysteine 134, and cysteine 89/cysteine 96. Substrate is bound by residues 65–69 (KPVNT), lysine 90, and arginine 109. Asparagine 112 carries an N-linked (GlcNAc...) asparagine glycan. The Proton donor role is filled by histidine 143.

Belongs to the pancreatic ribonuclease family. Monomer. Interacts with and forms tight 1:1 complexes with RNH1. Dimerization of two such complexes may occur. Interaction with RNH1 inhibits this protein.

The protein resides in the secreted. It carries out the reaction an [RNA] containing cytidine + H2O = an [RNA]-3'-cytidine-3'-phosphate + a 5'-hydroxy-ribonucleotide-3'-[RNA].. The catalysed reaction is an [RNA] containing uridine + H2O = an [RNA]-3'-uridine-3'-phosphate + a 5'-hydroxy-ribonucleotide-3'-[RNA].. Its function is as follows. Endonuclease that catalyzes the cleavage of RNA on the 3' side of pyrimidine nucleotides. Acts on single-stranded and double-stranded RNA. The chain is Ribonuclease pancreatic (RNASE1) from Papio hamadryas (Hamadryas baboon).